The chain runs to 640 residues: Threonine--tRNA ligase (640 aa).

A TGS domain is found at 1 to 63 (MSSVTVTLPD…SEDCEIEIVT (63 aa)). The segment at 242–533 (DHRKLGREMD…LIEHYNGRFP (292 aa)) is catalytic. 3 residues coordinate Zn(2+): Cys334, His385, and His510.

The protein belongs to the class-II aminoacyl-tRNA synthetase family. In terms of assembly, homodimer. The cofactor is Zn(2+).

The protein resides in the cytoplasm. It catalyses the reaction tRNA(Thr) + L-threonine + ATP = L-threonyl-tRNA(Thr) + AMP + diphosphate + H(+). Functionally, catalyzes the attachment of threonine to tRNA(Thr) in a two-step reaction: L-threonine is first activated by ATP to form Thr-AMP and then transferred to the acceptor end of tRNA(Thr). The protein is Threonine--tRNA ligase of Halobacterium salinarum (strain ATCC 29341 / DSM 671 / R1).